Here is a 479-residue protein sequence, read N- to C-terminus: PRAME family member 18 (479 aa).

Residues 15 to 38 (QSLLRDQALAISVLDELPRELFPP) form an LRR 1 repeat. An LRR 1; degenerate repeat occupies 97–124 (RWKLQVLEMRDVDENFWTIWSGARLLSC). Residues 179–203 (HLCCTKVVNYSMSILNFRNILETVY) form an LRR 2; degenerate repeat. The LRR 3; degenerate repeat unit spans residues 204 to 230 (PDSIQVLEIWNMCWLCMIVEFSRYLSQ). The stretch at 231 to 265 (MRNLRKLFISDGCRYLLSSDSQEQLVAEFSSVLLR) is one LRR 4; degenerate repeat. LRR repeat units lie at residues 266 to 291 (LENL…IRCL), 292 to 323 (RSPL…SQLK), 324 to 342 (QLNL…PLRA), 348 to 375 (AATL…ALSR), and 376 to 400 (CSNL…LLRH).

It belongs to the PRAME family.

The chain is PRAME family member 18 from Homo sapiens (Human).